An 88-amino-acid chain; its full sequence is Small ribosomal subunit protein uS15 (88 aa).

Belongs to the universal ribosomal protein uS15 family. As to quaternary structure, part of the 30S ribosomal subunit. Forms a bridge to the 50S subunit in the 70S ribosome, contacting the 23S rRNA.

In terms of biological role, one of the primary rRNA binding proteins, it binds directly to 16S rRNA where it helps nucleate assembly of the platform of the 30S subunit by binding and bridging several RNA helices of the 16S rRNA. Its function is as follows. Forms an intersubunit bridge (bridge B4) with the 23S rRNA of the 50S subunit in the ribosome. This Geobacter sulfurreducens (strain ATCC 51573 / DSM 12127 / PCA) protein is Small ribosomal subunit protein uS15.